The chain runs to 243 residues: Small ribosomal subunit protein uS3 (243 aa).

Residues 22 to 93 (LNEFLTRELA…SVELYAEKVA (72 aa)) form the KH type-2 domain. Residues 195–243 (QQGKNGPKKPQPDHILVTEPKDEPAPLEPTSDIRSLAPAPLPQPVAAVA) are disordered.

It belongs to the universal ribosomal protein uS3 family.

This chain is Small ribosomal subunit protein uS3 (RpS3), found in Manduca sexta (Tobacco hawkmoth).